The sequence spans 269 residues: C-type lectin domain family 2 member G (269 aa).

Topologically, residues 1 to 107 (MNITRASLPM…SPESSAKLYC (107 aa)) are cytoplasmic. The helical; Signal-anchor for type II membrane protein transmembrane segment at 108-128 (CCGVIMVLTVAVVALSVALPA) threads the bilayer. The Extracellular segment spans residues 129-269 (TKTEQILINK…SLHCPTPVPV (141 aa)). One can recognise a C-type lectin domain in the interval 150–254 (VGNKCFYFSE…HYIPRIWICS (105 aa)). N163 carries N-linked (GlcNAc...) asparagine glycosylation. Cysteines 171 and 253 form a disulfide.

In terms of tissue distribution, detected in vagina, eye, tongue, stomach and spleen.

Its subcellular location is the cell membrane. Inhibits osteoclast formation. In Mus musculus (Mouse), this protein is C-type lectin domain family 2 member G (Clec2g).